The following is a 417-amino-acid chain: Tyrosine--tRNA ligase (417 aa).

Tyr-39 provides a ligand contact to L-tyrosine. The 'HIGH' region signature appears at 44-53 (PTAPSLHAGG). L-tyrosine contacts are provided by Tyr-176 and Gln-180. The short motif at 236 to 240 (KMGKS) is the 'KMSKS' region element. Lys-239 provides a ligand contact to ATP. An S4 RNA-binding domain is found at 350–417 (IGVLALMVLA…KKRHVLIRPA (68 aa)).

It belongs to the class-I aminoacyl-tRNA synthetase family. TyrS type 1 subfamily. Homodimer.

The protein resides in the cytoplasm. The enzyme catalyses tRNA(Tyr) + L-tyrosine + ATP = L-tyrosyl-tRNA(Tyr) + AMP + diphosphate + H(+). In terms of biological role, catalyzes the attachment of tyrosine to tRNA(Tyr) in a two-step reaction: tyrosine is first activated by ATP to form Tyr-AMP and then transferred to the acceptor end of tRNA(Tyr). The protein is Tyrosine--tRNA ligase of Brucella suis biovar 1 (strain 1330).